The following is a 312-amino-acid chain: DNA primase small subunit PriS (312 aa).

Catalysis depends on residues Asp88, Asp90, and Asp215.

It belongs to the eukaryotic-type primase small subunit family. As to quaternary structure, heterodimer of a small subunit (PriS) and a large subunit (PriL). Mg(2+) serves as cofactor. It depends on Mn(2+) as a cofactor.

In terms of biological role, catalytic subunit of DNA primase, an RNA polymerase that catalyzes the synthesis of short RNA molecules used as primers for DNA polymerase during DNA replication. The small subunit contains the primase catalytic core and has DNA synthesis activity on its own. Binding to the large subunit stabilizes and modulates the activity, increasing the rate of DNA synthesis while decreasing the length of the DNA fragments, and conferring RNA synthesis capability. The DNA polymerase activity may enable DNA primase to also catalyze primer extension after primer synthesis. May also play a role in DNA repair. The protein is DNA primase small subunit PriS of Pyrobaculum aerophilum (strain ATCC 51768 / DSM 7523 / JCM 9630 / CIP 104966 / NBRC 100827 / IM2).